A 54-amino-acid polypeptide reads, in one-letter code: Large ribosomal subunit protein bL33A (54 aa).

It belongs to the bacterial ribosomal protein bL33 family.

The polypeptide is Large ribosomal subunit protein bL33A (rpmG1) (Mycobacterium bovis (strain ATCC BAA-935 / AF2122/97)).